A 462-amino-acid chain; its full sequence is Cysteine--tRNA ligase (462 aa).

Residue Cys29 coordinates Zn(2+). Residues 31–41 carry the 'HIGH' region motif; sequence PTVYDHAHIGN. Zn(2+) contacts are provided by Cys214, His239, and Glu243. Positions 272–276 match the 'KMSKS' region motif; it reads KMSKS. Lys275 provides a ligand contact to ATP.

It belongs to the class-I aminoacyl-tRNA synthetase family. Monomer. The cofactor is Zn(2+).

The protein localises to the cytoplasm. It carries out the reaction tRNA(Cys) + L-cysteine + ATP = L-cysteinyl-tRNA(Cys) + AMP + diphosphate. This is Cysteine--tRNA ligase from Azorhizobium caulinodans (strain ATCC 43989 / DSM 5975 / JCM 20966 / LMG 6465 / NBRC 14845 / NCIMB 13405 / ORS 571).